Consider the following 867-residue polypeptide: Nuclear body protein SP140 (867 aa).

One can recognise an HSR domain in the interval 22-138 (VAEIQNVEGQ…IYRSFQNVCY (117 aa)). Disordered regions lie at residues 260–341 (TYST…EEPQ), 365–432 (TPQV…SEEL), and 486–580 (IANN…KHKD). A compositionally biased stretch (basic and acidic residues) spans 268-301 (KQGEEEGRNSPRKRNQDKEKYQESPEGRDKETFD). Acidic residues-rich tracts occupy residues 323–341 (EGEE…EEPQ) and 384–397 (EGEE…EMCD). The span at 404–416 (ASSSLARRGSVSS) shows a compositional bias: low complexity. 2 stretches are compositionally biased toward basic residues: residues 494–512 (KPKR…RMRM) and 567–577 (QKRVRSRASRK). The Nuclear localization signal signature appears at 495 to 514 (PKRKRRKKRGHGWSRMRMRR). The SAND domain occupies 580 to 661 (DETVDFKAPL…RWLMENGFLP (82 aa)). The PHD-type zinc finger occupies 690 to 736 (LDECEVCRDGGELFCCDTCSRVFHEDCHIPPVEAERTPWNCIFCRMK). Thr-726 is subject to Phosphothreonine. In terms of domain architecture, Bromo spans 754-857 (QMCPEEQLKC…AEFEKNFKEV (104 aa)).

In terms of assembly, interacts with PIN1. In terms of processing, phosphorylation at Thr-726 promotes binding of PIN1 and subsequent isomerization of Pro-727. In terms of tissue distribution, high levels in spleen and peripheral blood leukocytes, much lower levels in tonsils, thymus, prostate, ovary, small intestine, and colon. Very low levels in heart, brain, placenta, lung, liver, skeletal muscle, kidney, and pancreas. Not detected in brain, liver and muscle.

The protein localises to the nucleus. It localises to the PML body. The protein resides in the cytoplasm. Component of the nuclear body, also known as nuclear domain 10, PML oncogenic domain, and KR body. May be involved in the pathogenesis of acute promyelocytic leukemia and viral infection. May play a role in chromatin-mediated regulation of gene expression although it does not bind to histone H3 tails. This is Nuclear body protein SP140 from Homo sapiens (Human).